Reading from the N-terminus, the 283-residue chain is Glutamate racemase (283 aa).

Residues 28 to 29 and 60 to 61 each bind substrate; these read DS and YG. Catalysis depends on C92, which acts as the Proton donor/acceptor. 93–94 is a binding site for substrate; the sequence is NT. Catalysis depends on C204, which acts as the Proton donor/acceptor. 205 to 206 serves as a coordination point for substrate; that stretch reads TH.

Belongs to the aspartate/glutamate racemases family.

The catalysed reaction is L-glutamate = D-glutamate. Its pathway is cell wall biogenesis; peptidoglycan biosynthesis. Provides the (R)-glutamate required for cell wall biosynthesis. The polypeptide is Glutamate racemase (Klebsiella pneumoniae (strain 342)).